Consider the following 405-residue polypeptide: Glucoside xylosyltransferase 1 (405 aa).

Topologically, residues 1–2 (MR) are cytoplasmic. The helical; Signal-anchor for type II membrane protein transmembrane segment at 3-23 (IYLRTFGLCIVVALLSLVFLF) threads the bilayer. Residues 24–405 (SKHDEGSFSA…RLQRATPPGD (382 aa)) lie on the Lumenal side of the membrane. The segment at 46–65 (SFNGAKAKQRPTATTSHRDV) is disordered. 4 N-linked (GlcNAc...) asparagine glycosylation sites follow: N202, N243, N277, and N372.

The protein belongs to the glycosyltransferase 8 family.

The protein localises to the membrane. The enzyme catalyses 3-O-(beta-D-glucosyl)-L-seryl-[EGF-like domain protein] + UDP-alpha-D-xylose = 3-O-[alpha-D-xylosyl-(1-&gt;3)-beta-D-glucosyl]-L-seryl-[EGF-like domain protein] + UDP + H(+). Glycosyltransferase which elongates the O-linked glucose attached to EGF-like repeats in the extracellular domain of Notch proteins by catalyzing the addition of xylose. This Danio rerio (Zebrafish) protein is Glucoside xylosyltransferase 1 (gxylt1).